We begin with the raw amino-acid sequence, 275 residues long: Ribosomal RNA small subunit methyltransferase A (275 aa).

Residues asparagine 21, leucine 23, glycine 48, glutamate 69, aspartate 94, and asparagine 115 each contribute to the S-adenosyl-L-methionine site.

Belongs to the class I-like SAM-binding methyltransferase superfamily. rRNA adenine N(6)-methyltransferase family. RsmA subfamily.

Its subcellular location is the cytoplasm. It catalyses the reaction adenosine(1518)/adenosine(1519) in 16S rRNA + 4 S-adenosyl-L-methionine = N(6)-dimethyladenosine(1518)/N(6)-dimethyladenosine(1519) in 16S rRNA + 4 S-adenosyl-L-homocysteine + 4 H(+). Its function is as follows. Specifically dimethylates two adjacent adenosines (A1518 and A1519) in the loop of a conserved hairpin near the 3'-end of 16S rRNA in the 30S particle. May play a critical role in biogenesis of 30S subunits. In Clostridium botulinum (strain Langeland / NCTC 10281 / Type F), this protein is Ribosomal RNA small subunit methyltransferase A.